The following is a 480-amino-acid chain: Ribulose bisphosphate carboxylase large chain (480 aa).

Positions 1–2 (MS) are excised as a propeptide. At Pro-3 the chain carries N-acetylproline. Lys-14 carries the post-translational modification N6,N6,N6-trimethyllysine. Residues Asn-123 and Thr-173 each coordinate substrate. Lys-175 (proton acceptor) is an active-site residue. Position 177 (Lys-177) interacts with substrate. Residues Lys-201, Asp-203, and Glu-204 each coordinate Mg(2+). N6-carboxylysine is present on Lys-201. His-294 acts as the Proton acceptor in catalysis. Positions 295, 327, and 379 each coordinate substrate.

This sequence belongs to the RuBisCO large chain family. Type I subfamily. Heterohexadecamer of 8 large chains and 8 small chains; disulfide-linked. The disulfide link is formed within the large subunit homodimers. Mg(2+) serves as cofactor. In terms of processing, the disulfide bond which can form in the large chain dimeric partners within the hexadecamer appears to be associated with oxidative stress and protein turnover.

The protein localises to the plastid. The protein resides in the chloroplast. The catalysed reaction is 2 (2R)-3-phosphoglycerate + 2 H(+) = D-ribulose 1,5-bisphosphate + CO2 + H2O. The enzyme catalyses D-ribulose 1,5-bisphosphate + O2 = 2-phosphoglycolate + (2R)-3-phosphoglycerate + 2 H(+). Functionally, ruBisCO catalyzes two reactions: the carboxylation of D-ribulose 1,5-bisphosphate, the primary event in carbon dioxide fixation, as well as the oxidative fragmentation of the pentose substrate in the photorespiration process. Both reactions occur simultaneously and in competition at the same active site. The sequence is that of Ribulose bisphosphate carboxylase large chain from Phalaenopsis aphrodite subsp. formosana (Moth orchid).